A 153-amino-acid chain; its full sequence is MRTTYDFAPLWRSTIGFDRLFDLVDAAQQAGTEDNYPPCNVERLSEDRYQISLAVAGFSADEIAITAEQSVLTVEGRKSEKQQREFLYQGISSRPFKRQFNLADYVQVKGASFDNGLLQIELVREIPEAMKPRRISISGSSASNVRQIDGKAA.

The sHSP domain occupies 30 to 140 (AGTEDNYPPC…KPRRISISGS (111 aa)).

Belongs to the small heat shock protein (HSP20) family.

In Bradyrhizobium diazoefficiens (strain JCM 10833 / BCRC 13528 / IAM 13628 / NBRC 14792 / USDA 110), this protein is Small heat shock protein HspB (hspB).